Consider the following 281-residue polypeptide: 2-dehydro-3-deoxyphosphooctonate aldolase (281 aa).

The protein belongs to the KdsA family.

The protein resides in the cytoplasm. It carries out the reaction D-arabinose 5-phosphate + phosphoenolpyruvate + H2O = 3-deoxy-alpha-D-manno-2-octulosonate-8-phosphate + phosphate. The protein operates within carbohydrate biosynthesis; 3-deoxy-D-manno-octulosonate biosynthesis; 3-deoxy-D-manno-octulosonate from D-ribulose 5-phosphate: step 2/3. Its pathway is bacterial outer membrane biogenesis; lipopolysaccharide biosynthesis. The chain is 2-dehydro-3-deoxyphosphooctonate aldolase from Pseudomonas fluorescens (strain Pf0-1).